The primary structure comprises 430 residues: Transcriptional regulatory protein RXT2 (430 aa).

A disordered region spans residues 408–430 (EIENTMEDGVVDDNEPDEEANRA).

It belongs to the RXT2 family. In terms of assembly, component of the RPD3C(L) complex composed of at least ASH1, CTI6, DEP1, PHO23, RPD3, RXT2, RXT3, SAP30, SDS3, SIN3, UME1 and UME6.

The protein localises to the nucleus. Its function is as follows. Component of the RPD3C(L) histone deacetylase complex (HDAC) responsible for the deacetylation of lysine residues on the N-terminal part of the core histones (H2A, H2B, H3 and H4). Histone deacetylation gives a tag for epigenetic repression and plays an important role in transcriptional regulation, cell cycle progression and developmental events. The chain is Transcriptional regulatory protein RXT2 (RXT2) from Saccharomyces cerevisiae (strain ATCC 204508 / S288c) (Baker's yeast).